An 835-amino-acid chain; its full sequence is Transcription intermediary factor 1-beta (835 aa).

Positions 14-24 (AATAASAASGS) are enriched in low complexity. The interval 14-57 (AATAASAASGSPGSGEGSAGGEKRPAASSAAAASASASSPAGGG) is disordered. Phosphoserine occurs at positions 24, 27, and 31. K36 is covalently cross-linked (Glycyl lysine isopeptide (Lys-Gly) (interchain with G-Cter in SUMO2)). The segment covering 39–53 (AASSAAAASASASSP) has biased composition (low complexity). A Phosphoserine modification is found at S52. The RING-type zinc-finger motif lies at 67–123 (CGVCRERLRPERDPRLLPCLHSACSACLGPATPAAANNSGDGGSAGDGAMVDCPVCK). K129 participates in a covalent cross-link: Glycyl lysine isopeptide (Lys-Gly) (interchain with G-Cter in SUMO2). Residue S140 is modified to Phosphoserine. A B box-type 1; atypical zinc finger spans residues 150–197 (DANQCCTSCEDNAPATSYCVECSEPLCETCVEAHQRVKYTKDHTVRST). The Zn(2+) site is built by C155, C158, C179, and H183. Residue K201 forms a Glycyl lysine isopeptide (Lys-Gly) (interchain with G-Cter in SUMO2) linkage. The B box-type 2 zinc finger occupies 206–247 (ERTVYCNVHKHEPLVLFCESCDTLTCRDCQLNAHKDHQYQFL). Zn(2+) is bound by residues C211, H214, C234, and H239. The tract at residues 248-378 (EDAVRNQRKL…LIYFQLHRAL (131 aa)) is leucine zipper alpha helical coiled-coil region. The tract at residues 249–378 (DAVRNQRKLL…LIYFQLHRAL (130 aa)) is interaction with MAGEC2. Residues K256 and K263 each participate in a glycyl lysine isopeptide (Lys-Gly) (interchain with G-Cter in SUMO2) cross-link. N6-acetyllysine is present on K268. A Glycyl lysine isopeptide (Lys-Gly) (interchain with G-Cter in SUMO2) cross-link involves residue K274. K306 carries the post-translational modification N6-acetyllysine; alternate. K306 participates in a covalent cross-link: Glycyl lysine isopeptide (Lys-Gly) (interchain with G-Cter in SUMO2); alternate. K321 participates in a covalent cross-link: Glycyl lysine isopeptide (Lys-Gly) (interchain with G-Cter in SUMO2). K342 carries the N6-acetyllysine modification. K368 is covalently cross-linked (Glycyl lysine isopeptide (Lys-Gly) (interchain with G-Cter in SUMO2)). The interval 368-372 (KLIYF) is involved in binding PPP1CA. K379 is modified (N6-acetyllysine; alternate). K379 is covalently cross-linked (Glycyl lysine isopeptide (Lys-Gly) (interchain with G-Cter in SUMO2); alternate). K379 is covalently cross-linked (Glycyl lysine isopeptide (Lys-Gly) (interchain with G-Cter in SUMO1); alternate). K409 is covalently cross-linked (Glycyl lysine isopeptide (Lys-Gly) (interchain with G-Cter in SUMO2)). Positions 413–481 (ERPGTNSTGP…SRSGEGEVSG (69 aa)) are disordered. S419 is modified (phosphoserine). A Glycyl lysine isopeptide (Lys-Gly) (interchain with G-Cter in SUMO2) cross-link involves residue K436. A compositionally biased stretch (polar residues) spans 436-445 (KQGSGSSQPM). Phosphoserine occurs at positions 439 and 441. K470 is covalently cross-linked (Glycyl lysine isopeptide (Lys-Gly) (interchain with G-Cter in SUMO2); alternate). Residue K470 forms a Glycyl lysine isopeptide (Lys-Gly) (interchain with G-Cter in SUMO1); alternate linkage. R471 is modified (citrulline). S472 carries the phosphoserine modification. At R473 the chain carries Citrulline. 3 positions are modified to phosphoserine: S474, S480, and S490. Residues 477 to 514 (GEVSGLMRKVPRVSLERLDLDLTSDSQPPVFKVFPGST) form an HP1 box region. The PxVxL motif motif lies at 482–495 (LMRKVPRVSLERLD). T499 is modified (phosphothreonine). The residue at position 502 (S502) is a Phosphoserine. K508 is covalently cross-linked (Glycyl lysine isopeptide (Lys-Gly) (interchain with G-Cter in SUMO2)). Residue K555 forms a Glycyl lysine isopeptide (Lys-Gly) (interchain with G-Cter in SUMO2); alternate linkage. A Glycyl lysine isopeptide (Lys-Gly) (interchain with G-Cter in SUMO); alternate cross-link involves residue K555. K576 participates in a covalent cross-link: Glycyl lysine isopeptide (Lys-Gly) (interchain with G-Cter in SUMO2). The residue at position 595 (S595) is a Phosphoserine. The PHD-type zinc finger occupies 626 to 673 (ATICRVCQKPGDLVMCNQCEFCFHLDCHLPSLQDVPGEEWSCSLCHVL). A Glycyl lysine isopeptide (Lys-Gly) (interchain with G-Cter in SUMO) cross-link involves residue K677. S684, S690, and S698 each carry phosphoserine. The Bromo domain maps to 696–800 (KLSPANQRKC…RFFETRMNDA (105 aa)). K751 is covalently cross-linked (Glycyl lysine isopeptide (Lys-Gly) (interchain with G-Cter in SUMO2); alternate). K751 participates in a covalent cross-link: Glycyl lysine isopeptide (Lys-Gly) (interchain with G-Cter in SUMO1); alternate. Residue K751 forms a Glycyl lysine isopeptide (Lys-Gly) (interchain with G-Cter in SUMO); alternate linkage. S753 carries the phosphoserine modification. Y756 is subject to Phosphotyrosine. Phosphoserine is present on S758. 3 positions are modified to N6-acetyllysine; alternate: K771, K775, and K780. Glycyl lysine isopeptide (Lys-Gly) (interchain with G-Cter in SUMO2); alternate cross-links involve residues K771, K775, and K780. Residue K780 forms a Glycyl lysine isopeptide (Lys-Gly) (interchain with G-Cter in SUMO1); alternate linkage. Residue S785 is modified to Phosphoserine. K805 participates in a covalent cross-link: Glycyl lysine isopeptide (Lys-Gly) (interchain with G-Cter in SUMO2). S825 is subject to Phosphoserine; by ATM and ATR and dsDNA kinase.

The protein belongs to the TRIM/RBCC family. Interacts with ZNF382. Interacts with SETX. Oligomer; the RBCC domain homotrimerizes and interacts with one molecule of KRAB to form the KRAB-KAP1 corepressor complex. Binding to a KRAB domain is an absolute requirement for silencing gene expression. Interacts with CEBPB and NR3C1. Interacts with a number of KRAB-ZFP proteins including ZNF10, ZFP53, ZFP68 and ZNF256. Interacts with NCOR1, NR3C1 and CHD3. Interacts with CEBPB (via the RING-type and PHD-type zinc fingers). Component of a ternary complex that includes TRIM28, a HP1 protein (CBX1, CBX3 OR CBX5), a KRAB domain-containing protein, and DNA. Interacts with CBX5 (via the PxVxL motif); the interaction occurs in interphase nuclei and competes for binding POGZ. Interacts with POGZ; the interaction competes for interaction with CBX5. Interacts with SETDB1; the interaction is enhanced by KAP1 sumoylation, stimulates SETDB1 histone methyltransferase activity and gene silencing. Interacts (via the PHD-type zinc finger) with UBE2I; the interaction is required for sumoylation and repressor activity. Component of the TRIM28/KAP1-ERBB4-MDM2 complex involved in connecting growth factor and DNA damage responses. Interacts directly with ERBB4; the interaction represses ERBB4-mediated transcription activity. Interacts with MDM2; the interaction contributes to p53/TP53 inactivation. Component of the TRIM28/KAP1-MDM2-p53/TP53; involved in regulating p53/TP53 stabilization and activity. Interacts (via the leucine zipper alpha helical coiled-coil) with E2F1 (central region); the interaction inhibits E2F1 acetylation and transcriptional activity. Interacts with PPP1CA; the interaction dephosphorylates TRIM28 at Ser-824 and forms a complex at the p21 promoter site. Interacts with PPP1CB; the interaction is weak but is increased on dephosphorylation at Ser-824. Interacts with SMARCAD1. Interacts with, and sumoylates IRF7. Interacts with MAGEC2. Part of a complex composed of TRIM28, HDAC1, HDAC2 and EHMT2. Interacts with AICDA. The large PER complex involved in the histone methylation is composed of at least PER2, CBX3, TRIM28, SUV39H1 and/or SUV39H2; CBX3 mediates the formation of the complex. Interacts with NR4A3; the interactions potentiates NR4A3 activity on NurRE promoter. Interacts (unphosphorylated or phosphorylated form) with ZBTB1 (via BTB domain). Probably part of a corepressor complex containing ZNF304, TRIM28, SETDB1 and DNMT1. Interacts with ATRX. Forms a complex with ATRX, SETDB1 and ZNF274. Interacts with ZFP568; the interaction mediates ZFP568 transcriptional repression activity. Interacts with RRP1B. Interacts with CRY1. Interacts with ZNF263; recruited to the SIX3 promoter along with other proteins involved in chromatin modification and transcriptional corepression where it contributes to transcriptional repression. Interacts with CYREN (via XLF motif). Interacts with TRIM17; this interaction prevents TRIM28 activity. Interacts with ZNF746. Interacts with PHF13. Interacts with ZNF354C. Interacts with ZNF432; the interaction is independent of PARP1. Post-translationally, ATM-induced phosphorylation on Ser-825 represses sumoylation leading to the de-repression of expression of a subset of genes involved in cell cycle control and apoptosis in response to genotoxic stress. Dephosphorylation by the phosphatases, PPP1CA and PP1CB forms, allows sumoylation and expression of TRIM28 target genes. Sumoylation/desumoylation events regulate TRIM28-mediated transcriptional repression. Sumoylation is required for interaction with CHD3 and SETDB1 and the corepressor activity. Represses and is repressed by Ser-824 phosphorylation. Enhances the TRIM28 corepressor activity, inhibiting transcriptional activity of a number of genes including GADD45A and CDKN1A/p21. Lys-555, Lys-780 and Lys-805 are the major sites of sumoylation. In response to Dox-induced DNA damage, enhanced phosphorylation on Ser-825 prevents sumoylation and allows de-repression of CDKN1A/p21. In terms of processing, auto-ubiquitinated; enhanced by MAGEA2 and MAGEC2. Post-translationally, citrullinated by PADI4. ADP-ribosylated by SIRT6, promoting TRIM28/KAP1 interaction with CBX5, thereby contributing to the packaging of LINE-1 retrotransposon elements into transcriptionally repressive heterochromatin.

Its subcellular location is the nucleus. It catalyses the reaction S-ubiquitinyl-[E2 ubiquitin-conjugating enzyme]-L-cysteine + [acceptor protein]-L-lysine = [E2 ubiquitin-conjugating enzyme]-L-cysteine + N(6)-ubiquitinyl-[acceptor protein]-L-lysine.. Its pathway is protein modification; protein sumoylation. Functionally, nuclear corepressor for KRAB domain-containing zinc finger proteins (KRAB-ZFPs). Mediates gene silencing by recruiting CHD3, a subunit of the nucleosome remodeling and deacetylation (NuRD) complex, and SETDB1 (which specifically methylates histone H3 at 'Lys-9' (H3K9me)) to the promoter regions of KRAB target genes. Enhances transcriptional repression by coordinating the increase in H3K9me, the decrease in histone H3 'Lys-9 and 'Lys-14' acetylation (H3K9ac and H3K14ac, respectively) and the disposition of HP1 proteins to silence gene expression. Recruitment of SETDB1 induces heterochromatinization. May play a role as a coactivator for CEBPB and NR3C1 in the transcriptional activation of ORM1. Also a corepressor for ERBB4. Inhibits E2F1 activity by stimulating E2F1-HDAC1 complex formation and inhibiting E2F1 acetylation. May serve as a partial backup to prevent E2F1-mediated apoptosis in the absence of RB1. Important regulator of CDKN1A/p21(CIP1). Has E3 SUMO-protein ligase activity toward itself via its PHD-type zinc finger. Also specifically sumoylates IRF7, thereby inhibiting its transactivation activity. Ubiquitinates p53/TP53 leading to its proteasomal degradation; the function is enhanced by MAGEC2 and MAGEA2, and possibly MAGEA3 and MAGEA6. Mediates the nuclear localization of KOX1, ZNF268 and ZNF300 transcription factors. In association with isoform 2 of ZFP90, is required for the transcriptional repressor activity of FOXP3 and the suppressive function of regulatory T-cells (Treg). Probably forms a corepressor complex required for activated KRAS-mediated promoter hypermethylation and transcriptional silencing of tumor suppressor genes (TSGs) or other tumor-related genes in colorectal cancer (CRC) cells. Required to maintain a transcriptionally repressive state of genes in undifferentiated embryonic stem cells (ESCs). In ESCs, in collaboration with SETDB1, is also required for H3K9me3 and silencing of endogenous and introduced retroviruses in a DNA-methylation independent-pathway. Associates at promoter regions of tumor suppressor genes (TSGs) leading to their gene silencing. The SETDB1-TRIM28-ZNF274 complex may play a role in recruiting ATRX to the 3'-exons of zinc finger genes with atypical chromatin signatures to establish or maintain/protect H3K9me3 at these transcriptionally active regions. The sequence is that of Transcription intermediary factor 1-beta from Rattus norvegicus (Rat).